Reading from the N-terminus, the 392-residue chain is Homoserine O-acetyltransferase (392 aa).

In terms of domain architecture, AB hydrolase-1 spans 52-356 (NVVVVLHALT…ICGHDGFLVE (305 aa)). Residue Ser157 is the Nucleophile of the active site. Arg227 is a substrate binding site. Active-site residues include Asp320 and His350. Asp351 contacts substrate. Residues 373 to 392 (SQSAGPGGAGPGSRKGTTRR) form a disordered region.

This sequence belongs to the AB hydrolase superfamily. MetX family. As to quaternary structure, homodimer.

The protein resides in the cytoplasm. The catalysed reaction is L-homoserine + acetyl-CoA = O-acetyl-L-homoserine + CoA. The protein operates within amino-acid biosynthesis; L-methionine biosynthesis via de novo pathway; O-acetyl-L-homoserine from L-homoserine: step 1/1. Transfers an acetyl group from acetyl-CoA to L-homoserine, forming acetyl-L-homoserine. The protein is Homoserine O-acetyltransferase of Mycolicibacterium paratuberculosis (strain ATCC BAA-968 / K-10) (Mycobacterium paratuberculosis).